The chain runs to 34 residues: Aspartate aminotransferase 2 (34 aa).

This sequence belongs to the class-I pyridoxal-phosphate-dependent aminotransferase family. As to quaternary structure, homodimer. It depends on pyridoxal 5'-phosphate as a cofactor.

It carries out the reaction L-aspartate + 2-oxoglutarate = oxaloacetate + L-glutamate. Its function is as follows. Important for the metabolism of amino acids and Krebs-cycle related organic acids. In plants, it is involved in nitrogen metabolism and in aspects of carbon and energy metabolism. This chain is Aspartate aminotransferase 2, found in Pseudotsuga menziesii (Douglas-fir).